We begin with the raw amino-acid sequence, 468 residues long: Lipase 1 (468 aa).

Positions 1 to 16 are cleaved as a signal peptide; the sequence is MRGIAVFLAFISLIFA. An N-linked (GlcNAc...) asparagine glycan is attached at Asn79. An intrachain disulfide couples Cys112 to Cys285. The active-site Charge relay system is Ser196. N-linked (GlcNAc...) asparagine glycans are attached at residues Asn231 and Asn319. Active-site charge relay system residues include Asp348 and His381. A disulfide bridge connects residues Cys364 and Cys409. Residues Asn417, Asn422, and Asn451 are each glycosylated (N-linked (GlcNAc...) asparagine).

Belongs to the AB hydrolase superfamily. Lipase family. Class Lip subfamily.

The protein localises to the secreted. It catalyses the reaction a triacylglycerol + H2O = a diacylglycerol + a fatty acid + H(+). Its function is as follows. Secreted lipase that is able to hydrolyze both the neutral triacylglycerols and the monopalmitate ester Tween 40, allowing the use of hydrolyzed products as carbon sources. Has broad lipolytic activity, which may be important for colonization and subsequent infection, therefore contributing to the persistence and virulence in human tissue. This Candida albicans (strain SC5314 / ATCC MYA-2876) (Yeast) protein is Lipase 1.